We begin with the raw amino-acid sequence, 256 residues long: Low molecular mass lipoprotein PBMHP-6 (256 aa).

An N-terminal signal peptide occupies residues 1 to 19; that stretch reads MRLTLFAFVLAVCALASNA.

This sequence belongs to the 30 kDa lipoprotein family.

It localises to the secreted. This chain is Low molecular mass lipoprotein PBMHP-6, found in Bombyx mori (Silk moth).